Consider the following 538-residue polypeptide: Probable inorganic phosphate transporter 1-4 (538 aa).

At 1–23 (MAGELKVLNALDSAKTQWYHFTA) the chain is on the cytoplasmic side. Residues 24 to 44 (IVIAGMGFFTDAYDLFSISLV) traverse the membrane as a helical segment. Over 45 to 69 (TKLLGRIYYFNPASKSPGSLPPNVS) the chain is Extracellular. Residues 70-90 (AAVNGVAFCGTLAGQLFFGWL) form a helical membrane-spanning segment. Topologically, residues 91 to 98 (GDKMGRKK) are cytoplasmic. A helical membrane pass occupies residues 99 to 119 (VYGMTLMLMVICCLASGLSFG). Residues 120 to 123 (SSAK) lie on the Extracellular side of the membrane. A helical membrane pass occupies residues 124-144 (GVMATLCFFRFWLGFGIGGDY). Topologically, residues 145–163 (PLSATIMSEYANKRTRGAF) are cytoplasmic. A helical membrane pass occupies residues 164–184 (IAAVFAMQGFGNLTGGIVAII). Residues 185–210 (VSAAFKSRFDAPAYRDDRTGSTVPQA) lie on the Extracellular side of the membrane. A helical transmembrane segment spans residues 211–231 (DYAWRIVLMFGAIPALLTYYW). Residues 232–294 (RMKMPETARY…RQFLRRHGRH (63 aa)) are Cytoplasmic-facing. A helical membrane pass occupies residues 295–315 (LLGTTVCWFVLDIAFYSSNLF). Residues 316–346 (QKDIYTAVQWLPKADTMSALEEMFKISRAQT) are Extracellular-facing. A helical membrane pass occupies residues 347 to 367 (LVALCGTIPGYWFTVFFIDII). Residues 368 to 369 (GR) lie on the Cytoplasmic side of the membrane. The chain crosses the membrane as a helical span at residues 370-390 (FVIQLGGFFFMTAFMLGLAVP). Residues 391–396 (YHHWTT) are Extracellular-facing. Residues 397–417 (PGNHIGFVVMYAFTFFFANFG) traverse the membrane as a helical segment. Topologically, residues 418–440 (PNSTTFIVPAEIFPARLRSTCHG) are cytoplasmic. A helical membrane pass occupies residues 441 to 461 (ISAAAGKAGAIVGSFGFLYAA). Topologically, residues 462–481 (QSTDASKTDAGYPPGIGVRN) are extracellular. A helical membrane pass occupies residues 482 to 502 (SLFFLAGCNVIGFFFTFLVPE). At 503–538 (SKGKSLEELSGENEDDDDVPEAPATADHRTAPAPPA) the chain is on the cytoplasmic side. The segment at 507–538 (SLEELSGENEDDDDVPEAPATADHRTAPAPPA) is disordered. Residues 511–522 (LSGENEDDDDVP) show a composition bias toward acidic residues.

It belongs to the major facilitator superfamily. Phosphate:H(+) symporter (TC 2.A.1.9) family. Expressed at low levels in roots.

It is found in the membrane. Its function is as follows. High-affinity transporter for external inorganic phosphate. This is Probable inorganic phosphate transporter 1-4 (PHT1-4) from Oryza sativa subsp. japonica (Rice).